The primary structure comprises 246 residues: Proteasome subunit alpha type-6-A (246 aa).

Belongs to the peptidase T1A family. As to quaternary structure, component of the 20S core complex of the 26S proteasome. The 26S proteasome is composed of a core protease (CP), known as the 20S proteasome, capped at one or both ends by the 19S regulatory particle (RP/PA700). The 20S proteasome core is composed of 28 subunits that are arranged in four stacked rings, resulting in a barrel-shaped structure. The two end rings are each formed by seven alpha subunits, and the two central rings are each formed by seven beta subunits. The catalytic chamber with the active sites is on the inside of the barrel. As to expression, ubiquitous low levels, higher expression in siliques and flowers.

Its subcellular location is the cytoplasm. It localises to the nucleus. Its function is as follows. The proteasome is a multicatalytic proteinase complex which is characterized by its ability to cleave peptides with Arg, Phe, Tyr, Leu, and Glu adjacent to the leaving group at neutral or slightly basic pH. The proteasome has an ATP-dependent proteolytic activity. This chain is Proteasome subunit alpha type-6-A (PAA1), found in Arabidopsis thaliana (Mouse-ear cress).